The chain runs to 355 residues: Small ribosomal subunit protein uS2 (355 aa).

The protein belongs to the universal ribosomal protein uS2 family.

This Methylobacterium radiotolerans (strain ATCC 27329 / DSM 1819 / JCM 2831 / NBRC 15690 / NCIMB 10815 / 0-1) protein is Small ribosomal subunit protein uS2.